A 612-amino-acid chain; its full sequence is 1,8-cineole synthase, chloroplastic (612 aa).

The N-terminal 52 residues, 1–52 (MALVSVAPLASRSCLSKSLISSTHELKPLRRTILPTLRWKSATPSINMCLTT), are a transit peptide targeting the chloroplast. Mg(2+) contacts are provided by Asp363, Asp367, and Asp515. A DDXXD motif motif is present at residues 363 to 367 (DDIYD).

Belongs to the terpene synthase family. Tpsd subfamily. It depends on Mg(2+) as a cofactor. Requires Mn(2+) as cofactor.

The protein resides in the plastid. It is found in the chloroplast. It carries out the reaction (2E)-geranyl diphosphate + H2O = 1,8-cineole + diphosphate. It functions in the pathway terpene metabolism; oleoresin biosynthesis. Its function is as follows. Terpene synthase (TPS) involved in the biosynthesis of monoterpene natural products included in conifer oleoresin secretions and volatile emissions; these compounds contribute to biotic and abiotic stress defense against herbivores and pathogens. Catalyzes the conversion of (2E)-geranyl diphosphate (GPP) to 1,8-cineole. This is 1,8-cineole synthase, chloroplastic from Picea sitchensis (Sitka spruce).